The following is a 745-amino-acid chain: GTPase-activating protein GYP7 (745 aa).

In terms of domain architecture, Rab-GAP TBC spans 391–623 (LADDATRKEV…NIWEVFFTDF (233 aa)).

Most effectively accelerate the intrinsic GTPase activity of YPT7. It is also active, but to a lesser extent, on YPT31, YPT32 and YPT1. YPT6 and SEC4. This chain is GTPase-activating protein GYP7 (GYP7), found in Candida glabrata (strain ATCC 2001 / BCRC 20586 / JCM 3761 / NBRC 0622 / NRRL Y-65 / CBS 138) (Yeast).